The following is a 147-amino-acid chain: Monothiol glutaredoxin-S5 (147 aa).

The Glutaredoxin domain occupies 49–146 (AAEVRRAVAE…PILKKAGALW (98 aa)). A [2Fe-2S] cluster-binding site is contributed by Cys69. The short motif at 144–147 (ALWL) is the Responsive for interaction with TGA factors element.

This sequence belongs to the glutaredoxin family. CC-type subfamily.

The protein resides in the cytoplasm. It localises to the nucleus. May only reduce GSH-thiol disulfides, but not protein disulfides. In Oryza sativa subsp. japonica (Rice), this protein is Monothiol glutaredoxin-S5 (GRXS5).